The sequence spans 331 residues: Adenosine deaminase (331 aa).

Zn(2+) is bound by residues H12 and H14. Residues H14, D16, and G170 each coordinate substrate. H197 is a Zn(2+) binding site. Residue E200 is the Proton donor of the active site. D278 contributes to the Zn(2+) binding site.

This sequence belongs to the metallo-dependent hydrolases superfamily. Adenosine and AMP deaminases family. Adenosine deaminase subfamily. Zn(2+) serves as cofactor.

The enzyme catalyses adenosine + H2O + H(+) = inosine + NH4(+). It catalyses the reaction 2'-deoxyadenosine + H2O + H(+) = 2'-deoxyinosine + NH4(+). Catalyzes the hydrolytic deamination of adenosine and 2-deoxyadenosine. This chain is Adenosine deaminase, found in Vibrio vulnificus (strain CMCP6).